Here is a 507-residue protein sequence, read N- to C-terminus: Histidine ammonia-lyase (507 aa).

The 5-imidazolinone (Ala-Gly) cross-link spans 141-143; it reads ASG. Ser142 is modified (2,3-didehydroalanine (Ser)).

The protein belongs to the PAL/histidase family. In terms of processing, contains an active site 4-methylidene-imidazol-5-one (MIO), which is formed autocatalytically by cyclization and dehydration of residues Ala-Ser-Gly.

Its subcellular location is the cytoplasm. It catalyses the reaction L-histidine = trans-urocanate + NH4(+). Its pathway is amino-acid degradation; L-histidine degradation into L-glutamate; N-formimidoyl-L-glutamate from L-histidine: step 1/3. The chain is Histidine ammonia-lyase from Natranaerobius thermophilus (strain ATCC BAA-1301 / DSM 18059 / JW/NM-WN-LF).